We begin with the raw amino-acid sequence, 431 residues long: UDP-N-acetylmuramate--L-alanine ligase (431 aa).

Position 108 to 114 (108 to 114) interacts with ATP; that stretch reads GAHGKST.

This sequence belongs to the MurCDEF family.

The protein resides in the cytoplasm. The catalysed reaction is UDP-N-acetyl-alpha-D-muramate + L-alanine + ATP = UDP-N-acetyl-alpha-D-muramoyl-L-alanine + ADP + phosphate + H(+). It functions in the pathway cell wall biogenesis; peptidoglycan biosynthesis. Its function is as follows. Cell wall formation. This chain is UDP-N-acetylmuramate--L-alanine ligase, found in Campylobacter jejuni subsp. jejuni serotype O:6 (strain 81116 / NCTC 11828).